A 423-amino-acid polypeptide reads, in one-letter code: Type II methyltransferase M.BamHI (423 aa).

Residues Asp397–Asn414 show a composition bias toward basic and acidic residues. The interval Asp397 to Glu423 is disordered.

Belongs to the N(4)/N(6)-methyltransferase family.

It catalyses the reaction a 2'-deoxycytidine in DNA + S-adenosyl-L-methionine = an N(4)-methyl-2'-deoxycytidine in DNA + S-adenosyl-L-homocysteine + H(+). Its function is as follows. A beta subtype methylase, recognizes the double-stranded sequence 5'-GGATCC-3', methylates C-5 on both strands, and protects the DNA from cleavage by the BamHI endonuclease. In Bacillus amyloliquefaciens (Bacillus velezensis), this protein is Type II methyltransferase M.BamHI.